A 547-amino-acid polypeptide reads, in one-letter code: Chaperonin GroEL (547 aa).

ATP-binding positions include 30 to 33, Lys51, 87 to 91, Gly415, 479 to 481, and Asp495; these read TLGP, DGTTT, and NAA.

It belongs to the chaperonin (HSP60) family. Forms a cylinder of 14 subunits composed of two heptameric rings stacked back-to-back. Interacts with the co-chaperonin GroES.

The protein localises to the cytoplasm. The catalysed reaction is ATP + H2O + a folded polypeptide = ADP + phosphate + an unfolded polypeptide.. Together with its co-chaperonin GroES, plays an essential role in assisting protein folding. The GroEL-GroES system forms a nano-cage that allows encapsulation of the non-native substrate proteins and provides a physical environment optimized to promote and accelerate protein folding. This is Chaperonin GroEL from Pseudomonas putida (strain GB-1).